A 304-amino-acid polypeptide reads, in one-letter code: Non-specific ribonucleoside hydrolase RihC (304 aa).

H233 is an active-site residue.

The protein belongs to the IUNH family. RihC subfamily.

Functionally, hydrolyzes both purine and pyrimidine ribonucleosides with a broad-substrate specificity. This Escherichia fergusonii (strain ATCC 35469 / DSM 13698 / CCUG 18766 / IAM 14443 / JCM 21226 / LMG 7866 / NBRC 102419 / NCTC 12128 / CDC 0568-73) protein is Non-specific ribonucleoside hydrolase RihC.